The chain runs to 244 residues: Probable ABC transporter ATP-binding protein in ycf23-apcF intergenic region (244 aa).

The region spanning 9–241 is the ABC transporter domain; that stretch reads LEINNLTVSY…KLSTLFGEHI (233 aa). Residue 41–48 coordinates ATP; that stretch reads GPNGAGKS.

The protein belongs to the ABC transporter superfamily.

The protein localises to the plastid. The protein resides in the cyanelle. This chain is Probable ABC transporter ATP-binding protein in ycf23-apcF intergenic region, found in Cyanophora paradoxa.